The sequence spans 436 residues: tRNA(Ile)-lysidine synthase (436 aa).

Position 27–32 (Ser27–Ser32) interacts with ATP.

This sequence belongs to the tRNA(Ile)-lysidine synthase family.

It localises to the cytoplasm. The catalysed reaction is cytidine(34) in tRNA(Ile2) + L-lysine + ATP = lysidine(34) in tRNA(Ile2) + AMP + diphosphate + H(+). Its function is as follows. Ligates lysine onto the cytidine present at position 34 of the AUA codon-specific tRNA(Ile) that contains the anticodon CAU, in an ATP-dependent manner. Cytidine is converted to lysidine, thus changing the amino acid specificity of the tRNA from methionine to isoleucine. This chain is tRNA(Ile)-lysidine synthase, found in Vibrio vulnificus (strain CMCP6).